The sequence spans 777 residues: Polyribonucleotide nucleotidyltransferase (777 aa).

Residues Asp494 and Asp500 each contribute to the Mg(2+) site. The KH domain occupies 561–620 (PRIITLQIDPSKIGALIGPGGKTIRSIIEQTGAQIDVEDDGRVFVTTPDADGARMAQSLI). The S1 motif domain occupies 630–699 (GEIFTGKVVR…GTGKLSLSRR (70 aa)). The segment at 703 to 777 (TGETAEQRKS…NDRRGGGFRG (75 aa)) is disordered. Gly residues predominate over residues 718 to 727 (GPRGGGGGGD). 2 stretches are compositionally biased toward basic and acidic residues: residues 728–761 (RGPR…DRGP) and 768–777 (NDRRGGGFRG).

Belongs to the polyribonucleotide nucleotidyltransferase family. Mg(2+) serves as cofactor.

Its subcellular location is the cytoplasm. The catalysed reaction is RNA(n+1) + phosphate = RNA(n) + a ribonucleoside 5'-diphosphate. In terms of biological role, involved in mRNA degradation. Catalyzes the phosphorolysis of single-stranded polyribonucleotides processively in the 3'- to 5'-direction. The protein is Polyribonucleotide nucleotidyltransferase of Herpetosiphon aurantiacus (strain ATCC 23779 / DSM 785 / 114-95).